Here is a 169-residue protein sequence, read N- to C-terminus: Lipoprotein signal peptidase (169 aa).

Transmembrane regions (helical) follow at residues 15–35, 47–67, 75–95, and 107–127; these read WLWLAIVIFLADIGIKYVVMN, ILPFFNLLYVHNYGAAFSFLS, WLFTGIAFVVTGLLTYWMSKL, and AMIIGGAVGNVFDRVIHGFVV. Residues Asp128 and Asp146 contribute to the active site. The helical transmembrane segment at 141 to 161 threads the bilayer; the sequence is AFNLADMAICLGAAMIILDGF.

This sequence belongs to the peptidase A8 family.

It is found in the cell inner membrane. The enzyme catalyses Release of signal peptides from bacterial membrane prolipoproteins. Hydrolyzes -Xaa-Yaa-Zaa-|-(S,diacylglyceryl)Cys-, in which Xaa is hydrophobic (preferably Leu), and Yaa (Ala or Ser) and Zaa (Gly or Ala) have small, neutral side chains.. It functions in the pathway protein modification; lipoprotein biosynthesis (signal peptide cleavage). In terms of biological role, this protein specifically catalyzes the removal of signal peptides from prolipoproteins. In Vibrio parahaemolyticus serotype O3:K6 (strain RIMD 2210633), this protein is Lipoprotein signal peptidase.